The chain runs to 453 residues: Tubulin alpha chain (453 aa).

Q11 is a GTP binding site. K40 is subject to N6-acetyllysine. GTP contacts are provided by E71, G144, T145, T179, N206, and N228. E71 provides a ligand contact to Mg(2+). Residue E254 is part of the active site.

This sequence belongs to the tubulin family. Dimer of alpha and beta chains. A typical microtubule is a hollow water-filled tube with an outer diameter of 25 nm and an inner diameter of 15 nM. Alpha-beta heterodimers associate head-to-tail to form protofilaments running lengthwise along the microtubule wall with the beta-tubulin subunit facing the microtubule plus end conferring a structural polarity. Microtubules usually have 13 protofilaments but different protofilament numbers can be found in some organisms and specialized cells. Mg(2+) is required as a cofactor. Post-translationally, undergoes a tyrosination/detyrosination cycle, the cyclic removal and re-addition of a C-terminal tyrosine residue by the enzymes tubulin tyrosine carboxypeptidase (TTCP) and tubulin tyrosine ligase (TTL), respectively. Acetylation of alpha chains at Lys-40 stabilizes microtubules and affects affinity and processivity of microtubule motors. This modification has a role in multiple cellular functions, ranging from cell motility, cell cycle progression or cell differentiation to intracellular trafficking and signaling.

The protein resides in the cytoplasm. Its subcellular location is the cytoskeleton. It catalyses the reaction GTP + H2O = GDP + phosphate + H(+). In terms of biological role, tubulin is the major constituent of microtubules, a cylinder consisting of laterally associated linear protofilaments composed of alpha- and beta-tubulin heterodimers. Microtubules grow by the addition of GTP-tubulin dimers to the microtubule end, where a stabilizing cap forms. Below the cap, tubulin dimers are in GDP-bound state, owing to GTPase activity of alpha-tubulin. This chain is Tubulin alpha chain (TUBA), found in Neospora caninum (Coccidian parasite).